Consider the following 292-residue polypeptide: Early E4 34 kDa protein (292 aa).

The protein belongs to the adenoviridae E4 30 to 34 kDa protein family. In terms of assembly, interacts with E1B-55k.

The protein localises to the host nucleus. Its subcellular location is the host cytoplasm. In terms of biological role, plays a major role to prevent cellular inhibition of viral genome replication by nuclear bodies. Assembles an SCF-like E3 ubiquitin ligase complex based on the cellular proteins ELOB, ELOC, CUL5 and RBX1, in cooperation with viral E1B-55K. This viral RING-type ligase ubiquitinates cellular substrates prior to proteasomal degradation: p53/TP53, LIG4, MRE11-RAD50-NBS1 (MRN) complex, ITGA3, DAXX and BLM. In Human adenovirus D serotype 9 (HAdV-9), this protein is Early E4 34 kDa protein.